The chain runs to 129 residues: Glycine cleavage system H protein (129 aa).

In terms of domain architecture, Lipoyl-binding spans 24-106 (HAVVGITDFA…YDGGWLFKLA (83 aa)). Lys-65 is modified (N6-lipoyllysine).

This sequence belongs to the GcvH family. In terms of assembly, the glycine cleavage system is composed of four proteins: P, T, L and H. It depends on (R)-lipoate as a cofactor.

In terms of biological role, the glycine cleavage system catalyzes the degradation of glycine. The H protein shuttles the methylamine group of glycine from the P protein to the T protein. This Hydrogenovibrio crunogenus (strain DSM 25203 / XCL-2) (Thiomicrospira crunogena) protein is Glycine cleavage system H protein.